A 223-amino-acid polypeptide reads, in one-letter code: Uracil-DNA glycosylase (223 aa).

Catalysis depends on Asp-61, which acts as the Proton acceptor.

Belongs to the uracil-DNA glycosylase (UDG) superfamily. UNG family.

The protein resides in the cytoplasm. It carries out the reaction Hydrolyzes single-stranded DNA or mismatched double-stranded DNA and polynucleotides, releasing free uracil.. Its function is as follows. Excises uracil residues from the DNA which can arise as a result of misincorporation of dUMP residues by DNA polymerase or due to deamination of cytosine. This chain is Uracil-DNA glycosylase, found in Histophilus somni (strain 129Pt) (Haemophilus somnus).